Here is a 255-residue protein sequence, read N- to C-terminus: Protein DAL82 (255 aa).

The interval 87 to 149 (PEHPRPRTKF…SQPLPLDSIT (63 aa)) is disordered. A compositionally biased stretch (basic and acidic residues) spans 128-138 (PNNHSSDDEHS).

In terms of biological role, positive regulator of allophanate-induced genes in S.cerevisiae. This Saccharomyces cerevisiae (strain ATCC 204508 / S288c) (Baker's yeast) protein is Protein DAL82 (DAL82).